The primary structure comprises 316 residues: Protoheme IX farnesyltransferase (316 aa).

9 helical membrane passes run valine 32–histidine 52, proline 53–leucine 73, isoleucine 93–phenylalanine 113, valine 116–phenylalanine 136, asparagine 152–threonine 172, threonine 180–phenylalanine 200, valine 221–serine 241, leucine 252–methionine 271, and isoleucine 289–valine 309.

The protein belongs to the UbiA prenyltransferase family. Protoheme IX farnesyltransferase subfamily.

The protein resides in the cell inner membrane. The catalysed reaction is heme b + (2E,6E)-farnesyl diphosphate + H2O = Fe(II)-heme o + diphosphate. It participates in porphyrin-containing compound metabolism; heme O biosynthesis; heme O from protoheme: step 1/1. Its function is as follows. Converts heme B (protoheme IX) to heme O by substitution of the vinyl group on carbon 2 of heme B porphyrin ring with a hydroxyethyl farnesyl side group. The polypeptide is Protoheme IX farnesyltransferase (Rhizobium johnstonii (strain DSM 114642 / LMG 32736 / 3841) (Rhizobium leguminosarum bv. viciae)).